The chain runs to 465 residues: Methylenetetrahydrofolate--tRNA-(uracil-5-)-methyltransferase TrmFO (465 aa).

G10 to G15 provides a ligand contact to FAD.

This sequence belongs to the MnmG family. TrmFO subfamily. FAD serves as cofactor.

It is found in the cytoplasm. The catalysed reaction is uridine(54) in tRNA + (6R)-5,10-methylene-5,6,7,8-tetrahydrofolate + NADH + H(+) = 5-methyluridine(54) in tRNA + (6S)-5,6,7,8-tetrahydrofolate + NAD(+). It catalyses the reaction uridine(54) in tRNA + (6R)-5,10-methylene-5,6,7,8-tetrahydrofolate + NADPH + H(+) = 5-methyluridine(54) in tRNA + (6S)-5,6,7,8-tetrahydrofolate + NADP(+). Functionally, catalyzes the folate-dependent formation of 5-methyl-uridine at position 54 (M-5-U54) in all tRNAs. This chain is Methylenetetrahydrofolate--tRNA-(uracil-5-)-methyltransferase TrmFO, found in Deinococcus radiodurans (strain ATCC 13939 / DSM 20539 / JCM 16871 / CCUG 27074 / LMG 4051 / NBRC 15346 / NCIMB 9279 / VKM B-1422 / R1).